We begin with the raw amino-acid sequence, 31 residues long: MESVAYILVLTMALAVLFFAIAFREPPRIEK.

Met1 is modified (N-formylmethionine). A helical transmembrane segment spans residues 3–23; it reads SVAYILVLTMALAVLFFAIAF.

Belongs to the PsbT family. In terms of assembly, PSII is composed of 1 copy each of membrane proteins PsbA, PsbB, PsbC, PsbD, PsbE, PsbF, PsbH, PsbI, PsbJ, PsbK, PsbL, PsbM, PsbT, PsbX, PsbY, PsbZ, Psb30/Ycf12, peripheral proteins PsbO, CyanoQ (PsbQ), PsbU, PsbV and a large number of cofactors. It forms dimeric complexes.

It is found in the cellular thylakoid membrane. In terms of biological role, found at the monomer-monomer interface of the photosystem II (PS II) dimer, plays a role in assembly and dimerization of PSII. PSII is a light-driven water plastoquinone oxidoreductase, using light energy to abstract electrons from H(2)O, generating a proton gradient subsequently used for ATP formation. This Synechocystis sp. (strain ATCC 27184 / PCC 6803 / Kazusa) protein is Photosystem II reaction center protein T.